The chain runs to 221 residues: Large ribosomal subunit protein uL3 (221 aa).

The protein belongs to the universal ribosomal protein uL3 family. As to quaternary structure, part of the 50S ribosomal subunit. Forms a cluster with proteins L14 and L19.

Its function is as follows. One of the primary rRNA binding proteins, it binds directly near the 3'-end of the 23S rRNA, where it nucleates assembly of the 50S subunit. The chain is Large ribosomal subunit protein uL3 from Chlamydia muridarum (strain MoPn / Nigg).